Consider the following 359-residue polypeptide: Fructose-bisphosphate aldolase class 2 (359 aa).

Lysine 9 is modified (N6-acetyllysine). Serine 62 provides a ligand contact to D-glyceraldehyde 3-phosphate. Catalysis depends on aspartate 110, which acts as the Proton donor. Residues histidine 111, aspartate 145, glutamate 175, and histidine 227 each contribute to the Zn(2+) site. Glycine 228 contacts dihydroxyacetone phosphate. Histidine 265 is a Zn(2+) binding site. Residues 266–268 (GGS) and 287–290 (NIDT) contribute to the dihydroxyacetone phosphate site.

It belongs to the class II fructose-bisphosphate aldolase family. Homodimer. The cofactor is Zn(2+).

It carries out the reaction beta-D-fructose 1,6-bisphosphate = D-glyceraldehyde 3-phosphate + dihydroxyacetone phosphate. Its pathway is carbohydrate degradation; glycolysis; D-glyceraldehyde 3-phosphate and glycerone phosphate from D-glucose: step 4/4. Catalyzes the aldol condensation of dihydroxyacetone phosphate (DHAP or glycerone-phosphate) with glyceraldehyde 3-phosphate (G3P) to form fructose 1,6-bisphosphate (FBP) in gluconeogenesis and the reverse reaction in glycolysis. The sequence is that of Fructose-bisphosphate aldolase class 2 (fbaA) from Escherichia coli O157:H7.